The primary structure comprises 257 residues: Trans-aconitate 2-methyltransferase (257 aa).

It belongs to the methyltransferase superfamily. Tam family.

The protein resides in the cytoplasm. It carries out the reaction trans-aconitate + S-adenosyl-L-methionine = (E)-3-(methoxycarbonyl)pent-2-enedioate + S-adenosyl-L-homocysteine. Catalyzes the S-adenosylmethionine monomethyl esterification of trans-aconitate. This Sinorhizobium fredii (strain NBRC 101917 / NGR234) protein is Trans-aconitate 2-methyltransferase.